The sequence spans 669 residues: Diacylglycerol lipase-beta (669 aa).

Residues 1-17 are Cytoplasmic-facing; that stretch reads MPGMVLFGRRWSLASDD. The chain crosses the membrane as a helical span at residues 18–38; it reads LVFPGSFELFLRVLWWIVSLT. Residues 39–58 are Extracellular-facing; it reads LYLTHRRRLDCPGGVLLSTY. Residues 59 to 79 traverse the membrane as a helical segment; it reads LIVLLVLLAVIICTVLAIVCV. Residues 80-102 lie on the Cytoplasmic side of the membrane; sequence SMRGTICNPGPRKSMSKLLYIRL. The chain crosses the membrane as a helical span at residues 103–123; it reads ALFLPEMVWASLGAAWVAKGI. The Extracellular portion of the chain corresponds to 124 to 128; that stretch reads QCDRT. A helical transmembrane segment spans residues 129–149; it reads VVIGIIATVIVSWIVIAATMV. The Cytoplasmic portion of the chain corresponds to 150 to 669; that stretch reads TIIFVFDPLG…CPGQGGSSVP (520 aa). Catalysis depends on charge relay system residues Ser-443 and Asp-495. A phosphoserine mark is found at Ser-570, Ser-578, and Ser-582.

This sequence belongs to the AB hydrolase superfamily. Lipase family. It depends on Ca(2+) as a cofactor. Expressed in liver and immune cells such as macrophages and microglias. In embryonic brains present in axonal tracts, while in adults localizes to dendritic fields, correlating with the developmental change in requirement for 2-AG synthesis from the pre- to the postsynaptic compartment (at protein level).

It localises to the cell membrane. It catalyses the reaction a 1,2-diacyl-sn-glycerol + H2O = a 2-acylglycerol + a fatty acid + H(+). It carries out the reaction 1-octadecanoyl-2-(5Z,8Z,11Z,14Z-eicosatetraenoyl)-sn-glycerol + H2O = 2-(5Z,8Z,11Z,14Z-eicosatetraenoyl)-glycerol + octadecanoate + H(+). The catalysed reaction is 1,2-di-(9Z-octadecenoyl)-sn-glycerol + H2O = 2-(9Z-octadecenoyl)-glycerol + (9Z)-octadecenoate + H(+). The enzyme catalyses 1-(9Z-octadecenoyl)-2-(5Z,8Z,11Z,14Z-eicosatetraenoyl)-sn-glycerol + H2O = 2-(5Z,8Z,11Z,14Z-eicosatetraenoyl)-glycerol + (9Z)-octadecenoate + H(+). It catalyses the reaction 1-(9Z-octadecenoyl)-2-octadecanoyl-sn-glycerol + H2O = 2-octadecanoylglycerol + (9Z)-octadecenoate + H(+). It carries out the reaction 1-(9Z-octadecenoyl)-2-(9Z,12Z-octadecadienoyl)-sn-glycerol + H2O = 2-(9Z,12Z-octadecadienoyl)-glycerol + (9Z)-octadecenoate + H(+). The catalysed reaction is 1-(9Z-octadecenoyl)-2-O-(5Z,8Z,11Z,14Z-eicosatetraenyl)-sn-glycerol + H2O = 2-O-(5Z,8Z,11Z,14Z)-eicosatetraenylglycerol + (9Z)-octadecenoate + H(+). The enzyme catalyses a triacylglycerol + H2O = a diacylglycerol + a fatty acid + H(+). It catalyses the reaction 1,2,3-tri-(5Z,8Z,11Z,14Z-eicosatetraenoyl)-glycerol + H2O = 1,2-di-(5Z,8Z,11Z,14Z-eicosatetraenoyl)-glycerol + (5Z,8Z,11Z,14Z)-eicosatetraenoate + H(+). It carries out the reaction 1,2,3-(4Z,7Z,10Z,13Z,16Z,19Z-docosahexaenoyl)-glycerol + H2O = 1,2-di-(4Z,7Z,10Z,13Z,16Z,19Z-docosahexaenoyl)-glycerol + (4Z,7Z,10Z,13Z,16Z,19Z)-docosahexaenoate + H(+). Inhibited by the 1,2,3-triazole urea covalent inhibitors KT109 and KT172. Inhibited by p-hydroxy-mercuri-benzoate and HgCl(2), but not by PMSF. Also inhibited by RHC80267, a drug that blocks 2-AG formation. In terms of biological role, lipase that catalyzes the hydrolysis of arachidonic acid (AA)-esterified diacylglycerols (DAGs) to produce the principal endocannabinoid, 2-arachidonoylglycerol (2-AG) which can be further cleaved by downstream enzymes to release arachidonic acid (AA) for cyclooxygenase (COX)-mediated eicosanoid production. Preferentially hydrolyzes DAGs at the sn-1 position in a calcium-dependent manner and has negligible activity against other lipids including monoacylglycerols and phospholipids. Plays a key role in the regulation of 2-AG and AA pools utilized by COX1/2 to generate lipid mediators of macrophage and microglia inflammatory responses. Also functions as a polyunsaturated fatty acids-specific triacylglycerol lipase in macrophages. Plays an important role to support the metabolic and signaling demands of macrophages. In Mus musculus (Mouse), this protein is Diacylglycerol lipase-beta (Daglb).